Here is a 362-residue protein sequence, read N- to C-terminus: Leucoanthocyanidin dioxygenase (362 aa).

A disordered region spans residues 1 to 23; that stretch reads MVTSAMGPSPRVEELARSGLDTI. A Fe2OG dioxygenase domain is found at 214-313; that stretch reads LIVQMKINFY…RISWAVFCEP (100 aa). Histidine 238, aspartate 240, and histidine 294 together coordinate Fe cation. The active site involves arginine 304.

This sequence belongs to the iron/ascorbate-dependent oxidoreductase family. Fe cation is required as a cofactor. The cofactor is L-ascorbate. In terms of tissue distribution, expressed in red but not in green forma of P.frutescens. In red forma, it is predominantly expressed in stems and leaves, but not in roots.

It carries out the reaction a (2R,3S,4S)-leucoanthocyanidin + 2-oxoglutarate + O2 = a 4-H-anthocyanidin with a 3-hydroxy group + succinate + CO2 + 2 H2O. It functions in the pathway pigment biosynthesis; anthocyanin biosynthesis. In terms of biological role, oxidation of leucoanthocyanidins into anthocyanidins. The sequence is that of Leucoanthocyanidin dioxygenase (ANS) from Perilla frutescens (Beefsteak mint).